The following is a 279-amino-acid chain: Thymidylate synthase (279 aa).

133–134 provides a ligand contact to dUMP; that stretch reads RR. The active-site Nucleophile is Cys-154. Residues 178-181, Asn-189, and 219-221 each bind dUMP; these read RSND and HIY. Asp-181 provides a ligand contact to (6R)-5,10-methylene-5,6,7,8-tetrahydrofolate. Ala-278 lines the (6R)-5,10-methylene-5,6,7,8-tetrahydrofolate pocket.

The protein belongs to the thymidylate synthase family. Bacterial-type ThyA subfamily. As to quaternary structure, homodimer.

The protein localises to the cytoplasm. It catalyses the reaction dUMP + (6R)-5,10-methylene-5,6,7,8-tetrahydrofolate = 7,8-dihydrofolate + dTMP. It functions in the pathway pyrimidine metabolism; dTTP biosynthesis. Catalyzes the reductive methylation of 2'-deoxyuridine-5'-monophosphate (dUMP) to 2'-deoxythymidine-5'-monophosphate (dTMP) while utilizing 5,10-methylenetetrahydrofolate (mTHF) as the methyl donor and reductant in the reaction, yielding dihydrofolate (DHF) as a by-product. This enzymatic reaction provides an intracellular de novo source of dTMP, an essential precursor for DNA biosynthesis. The polypeptide is Thymidylate synthase (Streptococcus pyogenes serotype M6 (strain ATCC BAA-946 / MGAS10394)).